A 413-amino-acid polypeptide reads, in one-letter code: MRGEIISVGTELLLGQILNTNAKYLSEKLALLGIDIYFHTNVGDNEERLKECLNIAFNRSDLIITTGGLGPTVDDITKETVASFLGLPLVENLEAKEEIIRFFEKIGQTPTMNNFKQAFFPEGAKILPNKNGTAPGCIIEKDNKIIIILPGPPSELIPMFEEYVYHYLKSKTNETIKSRVIKIFGLGESKVEEMVRPLLFNSNPTVAPLVGDGYVILRITAKGHDDKEISEMIEDMESRIRGIIGDYIYAVDEEEMEEVVVKLLQKNKLTLAVSESCTGGLLAKKITDVSGASKVFNLGVVSYSNEAKENILGVRKSTLESYGAVSYETAKEMAENVRKLANADFGLSTTGIAGPTGGTPEKPVGLVYVGFATNEEVYVKKLMLSGDRSKIRTRTVLHALDIVRRYLLGIKID.

It belongs to the CinA family.

In Thermoanaerobacter sp. (strain X514), this protein is Putative competence-damage inducible protein.